The sequence spans 119 residues: DNA-binding protein inhibitor ID-3 (119 aa).

Residues 28-80 enclose the bHLH domain; that stretch reads RGKSPSAEEPLSLLDDMNHCYSRLRELVPGVPRGTQLSQVEILQRVIDYILDL.

As to quaternary structure, homodimer, and heterodimer with other HLH proteins. Interacts with COPS5 and COPS7A. Interacts with IFI204. Interacts with GATA4 and NKX2-5. Interacts with ANKRD2; both proteins cooperate in myoblast differentiation. Interacts with CLOCK and BMAL1. In terms of processing, phosphorylated in vitro by CDC2 and PKC.

It localises to the nucleus. Its function is as follows. Transcriptional regulator (lacking a basic DNA binding domain) which negatively regulates the basic helix-loop-helix (bHLH) transcription factors by forming heterodimers and inhibiting their DNA binding and transcriptional activity. Implicated in regulating a variety of cellular processes, including cellular growth, senescence, differentiation, apoptosis, angiogenesis, and neoplastic transformation. Involved in myogenesis by inhibiting skeletal muscle and cardiac myocyte differentiation and promoting muscle precursor cells proliferation. Inhibits the binding of E2A-containing protein complexes to muscle creatine kinase E-box enhancer. Regulates the circadian clock by repressing the transcriptional activator activity of the CLOCK-BMAL1 heterodimer. The protein is DNA-binding protein inhibitor ID-3 (Id3) of Rattus norvegicus (Rat).